The chain runs to 593 residues: Autophagy-related protein 22-2 (593 aa).

Residues 42–62 (YGVAAEVFAVCGVGSFLPLTL) traverse the membrane as a helical segment. The N-linked (GlcNAc...) asparagine glycan is linked to Asn-90. Helical transmembrane passes span 112–132 (SFAM…LVSF), 159–179 (LFML…VIGV), and 181–201 (CLGS…ANDP). A disordered region spans residues 228 to 261 (SWTDEEDTGDHAGPAGSKKAVEPEKASSSTSPEL). A run of 4 helical transmembrane segments spans residues 271–291 (GVGL…LLLF), 305–325 (LPLR…TVVC), 377–397 (VVVF…VSGT), and 415–435 (LLSI…PIVA). N-linked (GlcNAc...) asparagine glycosylation is present at Asn-443. The next 4 helical transmembrane spans lie at 448–468 (LCIA…IPFI), 480–500 (WEIF…ASYC), 525–545 (KGSS…TGSV), and 548–568 (GFIF…LVNA).

The protein belongs to the ATG22 family.

The protein localises to the vacuole membrane. Its function is as follows. Vacuolar effluxer which mediate the efflux of amino acids resulting from autophagic degradation. The release of autophagic amino acids allows the maintenance of protein synthesis and viability during nitrogen starvation. The chain is Autophagy-related protein 22-2 (atg22-2) from Emericella nidulans (strain FGSC A4 / ATCC 38163 / CBS 112.46 / NRRL 194 / M139) (Aspergillus nidulans).